The primary structure comprises 107 residues: Nucleoid-associated protein Atu0095 (107 aa).

The segment at 81 to 107 (KGEAQAQEKMADLTAGLPLPPGMKLPF) is disordered. A compositionally biased stretch (pro residues) spans 98 to 107 (PLPPGMKLPF).

The protein belongs to the YbaB/EbfC family. In terms of assembly, homodimer.

Its subcellular location is the cytoplasm. The protein resides in the nucleoid. Its function is as follows. Binds to DNA and alters its conformation. May be involved in regulation of gene expression, nucleoid organization and DNA protection. This chain is Nucleoid-associated protein Atu0095, found in Agrobacterium fabrum (strain C58 / ATCC 33970) (Agrobacterium tumefaciens (strain C58)).